Here is a 341-residue protein sequence, read N- to C-terminus: MRKDLIELDGSEGGGQILRSALSLSMTSGQPLRIRNIRGRRSRPGLLRQHLTAVRAAAEICAAEVEGAELGSRELAFRPGAIRAGDYAFAIGSAGSCSLVLQTLLPALLAANGESRVRISGGTHNPLAPPADFLRDSWLPLLQRMGAEVDLELLRHGFVPAGGGELLARVRPARWRPLQLEHPGAALRRQARALLAGIPGHVGERELERVRQRLGWSDEERQLEFLAEDQGPGNALLLRIDCEHICATFCAFGQAGVSAERVAEQVATQAIGWMESGCAADEHLADQLLLPMALAGAGSFTTPRLSAHLQSNRRVIERFLPVRIGDQALDGGGHRIVITSA.

Residues Q102 and 283 to 287 contribute to the ATP site; that span reads HLADQ. The Tele-AMP-histidine intermediate role is filled by H308.

Belongs to the RNA 3'-terminal cyclase family. Type 1 subfamily.

The protein localises to the cytoplasm. It catalyses the reaction a 3'-end 3'-phospho-ribonucleotide-RNA + ATP = a 3'-end 2',3'-cyclophospho-ribonucleotide-RNA + AMP + diphosphate. In terms of biological role, catalyzes the conversion of 3'-phosphate to a 2',3'-cyclic phosphodiester at the end of RNA. The mechanism of action of the enzyme occurs in 3 steps: (A) adenylation of the enzyme by ATP; (B) transfer of adenylate to an RNA-N3'P to produce RNA-N3'PP5'A; (C) and attack of the adjacent 2'-hydroxyl on the 3'-phosphorus in the diester linkage to produce the cyclic end product. The biological role of this enzyme is unknown but it is likely to function in some aspects of cellular RNA processing. The sequence is that of RNA 3'-terminal phosphate cyclase from Pseudomonas aeruginosa (strain UCBPP-PA14).